Reading from the N-terminus, the 315-residue chain is Nucleotide-binding protein CGSHiEE_06315 (315 aa).

Residue Gly-8 to Ser-15 participates in ATP binding. Asp-56 to Asn-59 provides a ligand contact to GTP.

This sequence belongs to the RapZ-like family.

Displays ATPase and GTPase activities. In Haemophilus influenzae (strain PittEE), this protein is Nucleotide-binding protein CGSHiEE_06315.